The sequence spans 225 residues: Protein GrpE (225 aa).

Disordered stretches follow at residues 1-44 (MTEE…ENAG) and 183-225 (VAVA…PDEG).

This sequence belongs to the GrpE family. In terms of assembly, homodimer.

The protein localises to the cytoplasm. In terms of biological role, participates actively in the response to hyperosmotic and heat shock by preventing the aggregation of stress-denatured proteins, in association with DnaK and GrpE. It is the nucleotide exchange factor for DnaK and may function as a thermosensor. Unfolded proteins bind initially to DnaJ; upon interaction with the DnaJ-bound protein, DnaK hydrolyzes its bound ATP, resulting in the formation of a stable complex. GrpE releases ADP from DnaK; ATP binding to DnaK triggers the release of the substrate protein, thus completing the reaction cycle. Several rounds of ATP-dependent interactions between DnaJ, DnaK and GrpE are required for fully efficient folding. In Streptomyces coelicolor (strain ATCC BAA-471 / A3(2) / M145), this protein is Protein GrpE.